Reading from the N-terminus, the 289-residue chain is Elongation factor Ts (289 aa).

Positions 82–85 are involved in Mg(2+) ion dislocation from EF-Tu; sequence TDFL.

The protein belongs to the EF-Ts family.

It localises to the cytoplasm. Associates with the EF-Tu.GDP complex and induces the exchange of GDP to GTP. It remains bound to the aminoacyl-tRNA.EF-Tu.GTP complex up to the GTP hydrolysis stage on the ribosome. This Pseudomonas aeruginosa (strain LESB58) protein is Elongation factor Ts.